The chain runs to 227 residues: 7-cyano-7-deazaguanine synthase (227 aa).

7-17 contributes to the ATP binding site; the sequence is LSGGMDSLVTT. Positions 187, 195, 198, and 201 each coordinate Zn(2+).

The protein belongs to the QueC family. Requires Zn(2+) as cofactor.

It carries out the reaction 7-carboxy-7-deazaguanine + NH4(+) + ATP = 7-cyano-7-deazaguanine + ADP + phosphate + H2O + H(+). The protein operates within purine metabolism; 7-cyano-7-deazaguanine biosynthesis. In terms of biological role, catalyzes the ATP-dependent conversion of 7-carboxy-7-deazaguanine (CDG) to 7-cyano-7-deazaguanine (preQ(0)). In Chlorobium luteolum (strain DSM 273 / BCRC 81028 / 2530) (Pelodictyon luteolum), this protein is 7-cyano-7-deazaguanine synthase.